The following is a 397-amino-acid chain: S-adenosylmethionine synthase (397 aa).

His-17 is an ATP binding site. Residue Asp-19 participates in Mg(2+) binding. K(+) is bound at residue Glu-45. L-methionine-binding residues include Glu-58 and Gln-101. The flexible loop stretch occupies residues 101–111 (QSPDIAQGVDK). ATP is bound by residues 176-178 (DGK), 243-244 (RF), Asp-252, 258-259 (RK), and Lys-279. Residue Asp-252 participates in L-methionine binding. Residue Lys-283 coordinates L-methionine.

This sequence belongs to the AdoMet synthase family. Homotetramer; dimer of dimers. The cofactor is Mg(2+). Requires K(+) as cofactor.

It is found in the cytoplasm. The enzyme catalyses L-methionine + ATP + H2O = S-adenosyl-L-methionine + phosphate + diphosphate. Its pathway is amino-acid biosynthesis; S-adenosyl-L-methionine biosynthesis; S-adenosyl-L-methionine from L-methionine: step 1/1. In terms of biological role, catalyzes the formation of S-adenosylmethionine (AdoMet) from methionine and ATP. The overall synthetic reaction is composed of two sequential steps, AdoMet formation and the subsequent tripolyphosphate hydrolysis which occurs prior to release of AdoMet from the enzyme. The polypeptide is S-adenosylmethionine synthase (Staphylococcus aureus).